The chain runs to 352 residues: Coproporphyrin III ferrochelatase (352 aa).

The Fe-coproporphyrin III site is built by S52 and Y121. Fe(2+)-binding residues include H181 and E269.

The protein belongs to the ferrochelatase family.

The protein localises to the cytoplasm. It catalyses the reaction Fe-coproporphyrin III + 2 H(+) = coproporphyrin III + Fe(2+). Its pathway is porphyrin-containing compound metabolism; protoheme biosynthesis. Involved in coproporphyrin-dependent heme b biosynthesis. Catalyzes the insertion of ferrous iron into coproporphyrin III to form Fe-coproporphyrin III. The chain is Coproporphyrin III ferrochelatase from Nocardia farcinica (strain IFM 10152).